Consider the following 468-residue polypeptide: UDP-N-acetylmuramate--L-alanine ligase (468 aa).

Gly-114–Thr-120 lines the ATP pocket.

It belongs to the MurCDEF family.

Its subcellular location is the cytoplasm. It catalyses the reaction UDP-N-acetyl-alpha-D-muramate + L-alanine + ATP = UDP-N-acetyl-alpha-D-muramoyl-L-alanine + ADP + phosphate + H(+). The protein operates within cell wall biogenesis; peptidoglycan biosynthesis. In terms of biological role, cell wall formation. The protein is UDP-N-acetylmuramate--L-alanine ligase of Methylobacterium radiotolerans (strain ATCC 27329 / DSM 1819 / JCM 2831 / NBRC 15690 / NCIMB 10815 / 0-1).